A 310-amino-acid chain; its full sequence is AMMECR1-like protein (310 aa).

The disordered stretch occupies residues 26 to 95 (LSGSGTHSHG…LSPLPRPNGT (70 aa)). Polar residues predominate over residues 28 to 66 (GSGTHSHGNQSTTVPGSSSGPLQNHQHVDSSSGRENVSD). A Phosphoserine modification is found at serine 74. The AMMECR1 domain occupies 97-291 (NTTKNLVVTA…ISYAEYIASR (195 aa)).

The protein is AMMECR1-like protein (AMMECR1L) of Homo sapiens (Human).